A 428-amino-acid chain; its full sequence is Adenylosuccinate synthetase (428 aa).

GTP-binding positions include 12–18 (GDEGKGK) and 40–42 (GHT). D13 serves as the catalytic Proton acceptor. Mg(2+) contacts are provided by D13 and G40. IMP-binding positions include 13-16 (DEGK), 38-41 (NAGH), T128, R142, Q223, T238, and R302. Residue H41 is the Proton donor of the active site. Position 298–304 (298–304 (TTTGRPR)) interacts with substrate. GTP-binding positions include R304, 330-332 (SID), and 412-414 (SVG).

Belongs to the adenylosuccinate synthetase family. As to quaternary structure, homodimer. Mg(2+) is required as a cofactor.

The protein resides in the cytoplasm. The enzyme catalyses IMP + L-aspartate + GTP = N(6)-(1,2-dicarboxyethyl)-AMP + GDP + phosphate + 2 H(+). It participates in purine metabolism; AMP biosynthesis via de novo pathway; AMP from IMP: step 1/2. In terms of biological role, plays an important role in the de novo pathway of purine nucleotide biosynthesis. Catalyzes the first committed step in the biosynthesis of AMP from IMP. The sequence is that of Adenylosuccinate synthetase from Streptococcus pneumoniae serotype 2 (strain D39 / NCTC 7466).